A 354-amino-acid polypeptide reads, in one-letter code: Uroporphyrinogen decarboxylase (354 aa).

Residues 27–31 (RQAGR), Asp77, Tyr154, Thr209, and His327 contribute to the substrate site.

Belongs to the uroporphyrinogen decarboxylase family. In terms of assembly, homodimer.

Its subcellular location is the cytoplasm. It catalyses the reaction uroporphyrinogen III + 4 H(+) = coproporphyrinogen III + 4 CO2. The protein operates within porphyrin-containing compound metabolism; protoporphyrin-IX biosynthesis; coproporphyrinogen-III from 5-aminolevulinate: step 4/4. Its function is as follows. Catalyzes the decarboxylation of four acetate groups of uroporphyrinogen-III to yield coproporphyrinogen-III. The protein is Uroporphyrinogen decarboxylase of Klebsiella pneumoniae (strain 342).